We begin with the raw amino-acid sequence, 331 residues long: Ketol-acid reductoisomerase (NADP(+)) (331 aa).

One can recognise a KARI N-terminal Rossmann domain in the interval 2–182; it reads ARLYYDADAN…GGTRAGILET (181 aa). NADP(+) is bound by residues 25-28, Ser51, Ser53, and 83-86; these read YGSQ and DEVQ. Residue His108 is part of the active site. Residue Gly134 participates in NADP(+) binding. A KARI C-terminal knotted domain is found at 183–328; that stretch reads TFREETETDL…KDLRAMFSWL (146 aa). Asp191, Glu195, Glu227, and Glu231 together coordinate Mg(2+). Substrate is bound at residue Ser252.

The protein belongs to the ketol-acid reductoisomerase family. The cofactor is Mg(2+).

The catalysed reaction is (2R)-2,3-dihydroxy-3-methylbutanoate + NADP(+) = (2S)-2-acetolactate + NADPH + H(+). It carries out the reaction (2R,3R)-2,3-dihydroxy-3-methylpentanoate + NADP(+) = (S)-2-ethyl-2-hydroxy-3-oxobutanoate + NADPH + H(+). Its pathway is amino-acid biosynthesis; L-isoleucine biosynthesis; L-isoleucine from 2-oxobutanoate: step 2/4. It participates in amino-acid biosynthesis; L-valine biosynthesis; L-valine from pyruvate: step 2/4. In terms of biological role, involved in the biosynthesis of branched-chain amino acids (BCAA). Catalyzes an alkyl-migration followed by a ketol-acid reduction of (S)-2-acetolactate (S2AL) to yield (R)-2,3-dihydroxy-isovalerate. In the isomerase reaction, S2AL is rearranged via a Mg-dependent methyl migration to produce 3-hydroxy-3-methyl-2-ketobutyrate (HMKB). In the reductase reaction, this 2-ketoacid undergoes a metal-dependent reduction by NADPH to yield (R)-2,3-dihydroxy-isovalerate. The sequence is that of Ketol-acid reductoisomerase (NADP(+)) from Cyanothece sp. (strain PCC 7425 / ATCC 29141).